Reading from the N-terminus, the 318-residue chain is Protein W (318 aa).

Disordered stretches follow at residues 1-23 (MDQD…GGRE) and 38-318 (SEPT…KKGA). Positions 7 to 20 (ILKEDSEVEREAPG) are enriched in basic and acidic residues. Polar residues predominate over residues 50–59 (LHNTINTPQG). S68 is modified (phosphoserine; by host). Positions 83–101 (RSGEESRVSGRTSKPEAEA) are enriched in basic and acidic residues. A Phosphoserine; by host modification is found at S125. Basic and acidic residues predominate over residues 150–168 (GIEDENREMAAHPDKRGED). A compositionally biased stretch (polar residues) spans 191–206 (ASNNGRSMEPGSSHSA). Residues S192, S249, S257, and S260 each carry the phosphoserine; by host modification.

In Sendai virus (strain Z) (SeV), this protein is Protein W (P/V/C).